We begin with the raw amino-acid sequence, 92 residues long: UPF0250 protein COSY_0496 (92 aa).

The protein belongs to the UPF0250 family.

In Vesicomyosocius okutanii subsp. Calyptogena okutanii (strain HA), this protein is UPF0250 protein COSY_0496.